Reading from the N-terminus, the 77-residue chain is Translational regulator CsrA (77 aa).

It belongs to the CsrA/RsmA family. As to quaternary structure, homodimer; the beta-strands of each monomer intercalate to form a hydrophobic core, while the alpha-helices form wings that extend away from the core.

It localises to the cytoplasm. A translational regulator that binds mRNA to regulate translation initiation and/or mRNA stability. Usually binds in the 5'-UTR at or near the Shine-Dalgarno sequence preventing ribosome-binding, thus repressing translation. Its main target seems to be the major flagellin gene, while its function is anatagonized by FliW. This is Translational regulator CsrA from Desulfitobacterium hafniense (strain Y51).